We begin with the raw amino-acid sequence, 100 residues long: Bombyxin A-2 homolog (100 aa).

Residues 1–18 form the signal peptide; it reads MRTQVLFLIVVLAVMASG. Intrachain disulfides connect Cys-26-Cys-85, Cys-38-Cys-98, and Cys-84-Cys-89. Residues 47–75 constitute a propeptide, c peptide like; that stretch reads PPYISSENEGYGWKWLERQRARQLDEARG.

Belongs to the insulin family. As to quaternary structure, heterodimer of a B chain and an A chain linked by two disulfide bonds.

The protein resides in the secreted. Its function is as follows. Brain peptide responsible for activation of prothoracic glands to produce ecdysone in insects. The protein is Bombyxin A-2 homolog (SBXA2) of Samia cynthia (Ailanthus silkmoth).